We begin with the raw amino-acid sequence, 250 residues long: uncharacterized protein (250 aa).

The N-terminal stretch at 1–19 (MAKPRNAAESKAAKAQANA) is a signal peptide. Transmembrane regions (helical) follow at residues 51 to 71 (IGAF…AGGF) and 73 to 93 (MFTM…VIFG). Residues 226–250 (AGVMPKGPLPTTAKMRSVQRTVRRK) form a disordered region.

It localises to the cell membrane. This is an uncharacterized protein from Mycobacterium tuberculosis (strain CDC 1551 / Oshkosh).